Here is a 309-residue protein sequence, read N- to C-terminus: Porphobilinogen deaminase (309 aa).

C240 is modified (S-(dipyrrolylmethanemethyl)cysteine).

The protein belongs to the HMBS family. Monomer. Requires dipyrromethane as cofactor.

It carries out the reaction 4 porphobilinogen + H2O = hydroxymethylbilane + 4 NH4(+). It participates in porphyrin-containing compound metabolism; protoporphyrin-IX biosynthesis; coproporphyrinogen-III from 5-aminolevulinate: step 2/4. Tetrapolymerization of the monopyrrole PBG into the hydroxymethylbilane pre-uroporphyrinogen in several discrete steps. The chain is Porphobilinogen deaminase from Lawsonia intracellularis (strain PHE/MN1-00).